We begin with the raw amino-acid sequence, 440 residues long: Glucoside xylosyltransferase 1 (440 aa).

The Cytoplasmic segment spans residues 1–6 (MRRYLR). A helical; Signal-anchor for type II membrane protein transmembrane segment spans residues 7–29 (VVVLCVACGFCSLLYAFSQLAVS). At 30-440 (LEEGTGGGGG…DRYARSPKEK (411 aa)) the chain is on the lumenal side. N-linked (GlcNAc...) asparagine glycosylation is found at Asn-173, Asn-237, and Asn-278.

It belongs to the glycosyltransferase 8 family.

It localises to the membrane. The catalysed reaction is 3-O-(beta-D-glucosyl)-L-seryl-[EGF-like domain protein] + UDP-alpha-D-xylose = 3-O-[alpha-D-xylosyl-(1-&gt;3)-beta-D-glucosyl]-L-seryl-[EGF-like domain protein] + UDP + H(+). In terms of biological role, glycosyltransferase which elongates the O-linked glucose attached to EGF-like repeats in the extracellular domain of Notch proteins by catalyzing the addition of xylose. The chain is Glucoside xylosyltransferase 1 (GXYLT1) from Homo sapiens (Human).